A 681-amino-acid polypeptide reads, in one-letter code: DNA ligase (681 aa).

NAD(+)-binding positions include 35-39, 84-85, and Glu121; these read DAEYD and SI. Lys123 serves as the catalytic N6-AMP-lysine intermediate. NAD(+)-binding residues include Arg144, Glu180, Lys300, and Lys324. Zn(2+) is bound by residues Cys418, Cys421, Cys436, and Cys442. The BRCT domain occupies 601 to 681; it reads AADGPASGKT…GLRRLLEQPA (81 aa).

It belongs to the NAD-dependent DNA ligase family. LigA subfamily. Requires Mg(2+) as cofactor. Mn(2+) is required as a cofactor.

It carries out the reaction NAD(+) + (deoxyribonucleotide)n-3'-hydroxyl + 5'-phospho-(deoxyribonucleotide)m = (deoxyribonucleotide)n+m + AMP + beta-nicotinamide D-nucleotide.. Functionally, DNA ligase that catalyzes the formation of phosphodiester linkages between 5'-phosphoryl and 3'-hydroxyl groups in double-stranded DNA using NAD as a coenzyme and as the energy source for the reaction. It is essential for DNA replication and repair of damaged DNA. The chain is DNA ligase from Aromatoleum aromaticum (strain DSM 19018 / LMG 30748 / EbN1) (Azoarcus sp. (strain EbN1)).